The sequence spans 159 residues: Keratin-associated protein 9-8 (159 aa).

15 consecutive repeat copies span residues 8-12 (CCQPT), 13-17 (CCRTT), 32-36 (CCQPS), 37-41 (CCVSS), 46-50 (CCRPT), 51-55 (CCQNT), 56-60 (CCQPI), 65-69 (CCQPS), 70-74 (CCSTP), 75-79 (CCQPT), 80-84 (CCGQT), 129-133 (CCRPA), 134-138 (CCETT), 139-142 (CCRT), and 153-157 (CCQPS). The interval 8-157 (CCQPTCCRTT…TCVSSCCQPS (150 aa)) is 15 X 5 AA repeats of C-C-[RQVSGE]-[SPSNQ]-[TASPI].

It belongs to the KRTAP type 9 family. In terms of assembly, interacts with hair keratins.

Its function is as follows. In the hair cortex, hair keratin intermediate filaments are embedded in an interfilamentous matrix, consisting of hair keratin-associated proteins (KRTAP), which are essential for the formation of a rigid and resistant hair shaft through their extensive disulfide bond cross-linking with abundant cysteine residues of hair keratins. The matrix proteins include the high-sulfur and high-glycine-tyrosine keratins. In Homo sapiens (Human), this protein is Keratin-associated protein 9-8 (KRTAP9-8).